A 134-amino-acid chain; its full sequence is Ribulose bisphosphate carboxylase small subunit (134 aa).

It belongs to the RuBisCO small chain family. Heterohexadecamer of 8 large and 8 small subunits.

RuBisCO catalyzes two reactions: the carboxylation of D-ribulose 1,5-bisphosphate, the primary event in carbon dioxide fixation, as well as the oxidative fragmentation of the pentose substrate. Both reactions occur simultaneously and in competition at the same active site. Although the small subunit is not catalytic it is essential for maximal activity. The protein is Ribulose bisphosphate carboxylase small subunit of Bradyrhizobium diazoefficiens (strain JCM 10833 / BCRC 13528 / IAM 13628 / NBRC 14792 / USDA 110).